The primary structure comprises 84 residues: Small ribosomal subunit protein uS17 (84 aa).

This sequence belongs to the universal ribosomal protein uS17 family. As to quaternary structure, part of the 30S ribosomal subunit.

In terms of biological role, one of the primary rRNA binding proteins, it binds specifically to the 5'-end of 16S ribosomal RNA. In Borrelia recurrentis (strain A1), this protein is Small ribosomal subunit protein uS17.